We begin with the raw amino-acid sequence, 36 residues long: uncharacterized protein (36 aa).

This is an uncharacterized protein from Escherichia coli (strain K12).